A 252-amino-acid polypeptide reads, in one-letter code: MSDWNPSLYLHFAAERSRPAVELLARVPLENIEYIADLGCGPGNSTALLHQRWPAARITGIDSSPAMIAEARSALPDCLFVEADIRNWQPEQALDLIFANASLQWLPDHYELFPHLVSLLSPLGVLAVQMPDNWLEPTHVLMREVAWEQNYPDRGREPLAGVHAYYDILSEAGCEVDIWRTTYYHQMPSHQAIIDWVTATGLRPWLQDLTESEQQHFLTRYHQMLEEQYPLQENGQILLAFPRLFIVARRTE.

It belongs to the methyltransferase superfamily. Tam family.

It localises to the cytoplasm. The enzyme catalyses trans-aconitate + S-adenosyl-L-methionine = (E)-3-(methoxycarbonyl)pent-2-enedioate + S-adenosyl-L-homocysteine. In terms of biological role, catalyzes the S-adenosylmethionine monomethyl esterification of trans-aconitate. The chain is Trans-aconitate 2-methyltransferase from Escherichia coli O6:H1 (strain CFT073 / ATCC 700928 / UPEC).